Here is a 495-residue protein sequence, read N- to C-terminus: UDP-N-acetylmuramoyl-L-alanyl-D-glutamate--2,6-diaminopimelate ligase (495 aa).

Residue serine 29 coordinates UDP-N-acetyl-alpha-D-muramoyl-L-alanyl-D-glutamate. Residue glycine 111 to serine 117 coordinates ATP. UDP-N-acetyl-alpha-D-muramoyl-L-alanyl-D-glutamate contacts are provided by residues threonine 153–threonine 154, serine 180, glutamine 186, and arginine 188. Lysine 220 bears the N6-carboxylysine mark. Residues arginine 384, aspartate 408–arginine 411, glycine 459, and glutamate 463 each bind meso-2,6-diaminopimelate. The Meso-diaminopimelate recognition motif motif lies at aspartate 408 to arginine 411.

Belongs to the MurCDEF family. MurE subfamily. The cofactor is Mg(2+). Carboxylation is probably crucial for Mg(2+) binding and, consequently, for the gamma-phosphate positioning of ATP.

Its subcellular location is the cytoplasm. The catalysed reaction is UDP-N-acetyl-alpha-D-muramoyl-L-alanyl-D-glutamate + meso-2,6-diaminopimelate + ATP = UDP-N-acetyl-alpha-D-muramoyl-L-alanyl-gamma-D-glutamyl-meso-2,6-diaminopimelate + ADP + phosphate + H(+). The protein operates within cell wall biogenesis; peptidoglycan biosynthesis. Its function is as follows. Catalyzes the addition of meso-diaminopimelic acid to the nucleotide precursor UDP-N-acetylmuramoyl-L-alanyl-D-glutamate (UMAG) in the biosynthesis of bacterial cell-wall peptidoglycan. This Xylella fastidiosa (strain 9a5c) protein is UDP-N-acetylmuramoyl-L-alanyl-D-glutamate--2,6-diaminopimelate ligase.